We begin with the raw amino-acid sequence, 156 residues long: Small ribosomal subunit protein uS7c (156 aa).

It belongs to the universal ribosomal protein uS7 family. As to quaternary structure, part of the 30S ribosomal subunit.

The protein localises to the plastid. It localises to the chloroplast. Functionally, one of the primary rRNA binding proteins, it binds directly to 16S rRNA where it nucleates assembly of the head domain of the 30S subunit. This Zamia furfuracea (Cardboard cycad) protein is Small ribosomal subunit protein uS7c (rps7).